A 362-amino-acid chain; its full sequence is 3-isopropylmalate dehydrogenase (362 aa).

75–88 (GPKWANLPPTEQPE) provides a ligand contact to NAD(+). Positions 96, 106, 135, and 224 each coordinate substrate. 3 residues coordinate Mg(2+): D224, D248, and D252. 282-294 (GSAPDIAGLGVAN) provides a ligand contact to NAD(+).

Belongs to the isocitrate and isopropylmalate dehydrogenases family. LeuB type 1 subfamily. Homodimer. It depends on Mg(2+) as a cofactor. Mn(2+) serves as cofactor.

The protein resides in the cytoplasm. The catalysed reaction is (2R,3S)-3-isopropylmalate + NAD(+) = 4-methyl-2-oxopentanoate + CO2 + NADH. It functions in the pathway amino-acid biosynthesis; L-leucine biosynthesis; L-leucine from 3-methyl-2-oxobutanoate: step 3/4. Its function is as follows. Catalyzes the oxidation of 3-carboxy-2-hydroxy-4-methylpentanoate (3-isopropylmalate) to 3-carboxy-4-methyl-2-oxopentanoate. The product decarboxylates to 4-methyl-2 oxopentanoate. This Colwellia psychrerythraea (strain 34H / ATCC BAA-681) (Vibrio psychroerythus) protein is 3-isopropylmalate dehydrogenase.